We begin with the raw amino-acid sequence, 1190 residues long: Laminin subunit gamma-2 (1190 aa).

The N-terminal stretch at 1–21 is a signal peptide; the sequence is MPALWLRCGLCLALLLPAARA. 12 disulfides stabilise this stretch: Cys28–Cys37, Cys30–Cys53, Cys56–Cys65, Cys68–Cys81, Cys84–Cys96, Cys86–Cys102, Cys104–Cys113, Cys116–Cys128, Cys139–Cys150, Cys141–Cys155, Cys157–Cys166, and Cys169–Cys184. Laminin EGF-like domains are found at residues 28–83, 84–130, and 139–186; these read CDCN…RCLP, CNCN…GCAQ, and CDCD…GCTQ. Positions 187–196 constitute a Laminin EGF-like 4; first part domain; it reads CFCYGHSASC. The region spanning 213–381 is the Laminin IV type A domain; the sequence is QDVDGWKAVQ…SGAPAPWVEQ (169 aa). N-linked (GlcNAc...) asparagine glycans are attached at residues Asn342 and Asn362. The Laminin EGF-like 4; second part domain occupies 382-415; that stretch reads CVCPVGYKGQFCQDCASGYKRDSARLGPFGTCIP. Laminin EGF-like domains are found at residues 416-462, 463-517, and 518-573; these read CNCQ…SCKP, CPCR…PCQP, and CQCN…KCRA. Disulfide bonds link Cys463/Cys471, Cys465/Cys482, Cys485/Cys494, Cys497/Cys515, Cys518/Cys532, Cys520/Cys539, Cys542/Cys551, Cys554/Cys571, Cys574/Cys586, Cys576/Cys592, and Cys594/Cys603. Positions 574–603 constitute a Laminin EGF-like 8; truncated domain; it reads CNCNPVGSEPVECRSDGSCVCKPGFGGLSC. Positions 604-1190 are domain II and I; the sequence is EHAALTSCPA…CYNTQALEQQ (587 aa). Residues 613–718 adopt a coiled-coil conformation; sequence ACYNQVKVQM…GSQYQNQVQD (106 aa). The O-linked (Xyl...) (chondroitin sulfate) serine glycan is linked to Ser803. Coiled coils occupy residues 809-1073 and 1114-1190; these read AVVQ…AVQM and EERL…LEQQ. N-linked (GlcNAc...) asparagine glycans are attached at residues Asn939 and Asn1030.

Laminin is a complex glycoprotein, consisting of three different polypeptide chains (alpha, beta, gamma), which are bound to each other by disulfide bonds into a cross-shaped molecule comprising one long and three short arms with globules at each end. Gamma-2 is a subunit of laminin-5 (laminin-332 or epiligrin/kalinin/nicein). In terms of processing, O-glycosylated; contains chondroitin sulfate (CS).

The protein localises to the secreted. It localises to the extracellular space. It is found in the extracellular matrix. The protein resides in the basement membrane. Binding to cells via a high affinity receptor, laminin is thought to mediate the attachment, migration and organization of cells into tissues during embryonic development by interacting with other extracellular matrix components. Ladsin exerts cell-scattering activity toward a wide variety of cells, including epithelial, endothelial, and fibroblastic cells. The chain is Laminin subunit gamma-2 (LAMC2) from Equus caballus (Horse).